The following is a 316-amino-acid chain: Beta-ketoacyl-[acyl-carrier-protein] synthase III (316 aa).

Catalysis depends on residues C112 and H243. Residues Q244–R248 form an ACP-binding region. N273 is a catalytic residue.

This sequence belongs to the thiolase-like superfamily. FabH family. As to quaternary structure, homodimer.

It localises to the cytoplasm. The catalysed reaction is malonyl-[ACP] + acetyl-CoA + H(+) = 3-oxobutanoyl-[ACP] + CO2 + CoA. Its pathway is lipid metabolism; fatty acid biosynthesis. Functionally, catalyzes the condensation reaction of fatty acid synthesis by the addition to an acyl acceptor of two carbons from malonyl-ACP. Catalyzes the first condensation reaction which initiates fatty acid synthesis and may therefore play a role in governing the total rate of fatty acid production. Possesses both acetoacetyl-ACP synthase and acetyl transacylase activities. Its substrate specificity determines the biosynthesis of branched-chain and/or straight-chain of fatty acids. In Yersinia pseudotuberculosis serotype O:1b (strain IP 31758), this protein is Beta-ketoacyl-[acyl-carrier-protein] synthase III.